The chain runs to 136 residues: Large ribosomal subunit protein uL16 (136 aa).

The protein belongs to the universal ribosomal protein uL16 family. In terms of assembly, part of the 50S ribosomal subunit.

Its function is as follows. Binds 23S rRNA and is also seen to make contacts with the A and possibly P site tRNAs. The chain is Large ribosomal subunit protein uL16 from Ruthia magnifica subsp. Calyptogena magnifica.